The sequence spans 179 residues: Adenine phosphoribosyltransferase (179 aa).

The protein belongs to the purine/pyrimidine phosphoribosyltransferase family. Homodimer.

Its subcellular location is the cytoplasm. The catalysed reaction is AMP + diphosphate = 5-phospho-alpha-D-ribose 1-diphosphate + adenine. The protein operates within purine metabolism; AMP biosynthesis via salvage pathway; AMP from adenine: step 1/1. In terms of biological role, catalyzes a salvage reaction resulting in the formation of AMP, that is energically less costly than de novo synthesis. This is Adenine phosphoribosyltransferase from Helicobacter pylori (strain J99 / ATCC 700824) (Campylobacter pylori J99).